The chain runs to 510 residues: Probable lysine--tRNA ligase, cytoplasmic (510 aa).

It belongs to the class-II aminoacyl-tRNA synthetase family. In terms of assembly, homodimer.

The protein resides in the cytoplasm. The enzyme catalyses tRNA(Lys) + L-lysine + ATP = L-lysyl-tRNA(Lys) + AMP + diphosphate. This is Probable lysine--tRNA ligase, cytoplasmic from Encephalitozoon cuniculi (strain GB-M1) (Microsporidian parasite).